The sequence spans 454 residues: Phenylalanine--tRNA ligase, mitochondrial (454 aa).

Substrate-binding positions include 141-144 (SAHQ), R163, 170-172 (VHY), 177-179 (QME), E266, and F291. Residues 327–347 (KSISTSSSSSSSSSSSSSSTL) form a disordered region. Residues 328 to 347 (SISTSSSSSSSSSSSSSSTL) show a composition bias toward low complexity. One can recognise an FDX-ACB domain in the interval 361-454 (SKYPSCFKDV…LENHLSVKLR (94 aa)).

Belongs to the class-II aminoacyl-tRNA synthetase family. Monomer.

Its subcellular location is the mitochondrion matrix. It catalyses the reaction tRNA(Phe) + L-phenylalanine + ATP = L-phenylalanyl-tRNA(Phe) + AMP + diphosphate + H(+). Its function is as follows. Is responsible for the charging of tRNA(Phe) with phenylalanine in mitochondrial translation. This chain is Phenylalanine--tRNA ligase, mitochondrial (mpheS), found in Dictyostelium discoideum (Social amoeba).